The primary structure comprises 181 residues: UPF0302 protein lmo1921 (181 aa).

It belongs to the UPF0302 family.

The protein is UPF0302 protein lmo1921 of Listeria monocytogenes serovar 1/2a (strain ATCC BAA-679 / EGD-e).